We begin with the raw amino-acid sequence, 901 residues long: Protein translocase subunit SecA (901 aa).

Residues Q87, 105–109 (GEGKT), and D512 each bind ATP. Residues 859-901 (HQDDDSAAAAALAAQTGERKVGRNDPCPCGSGKKYKQCHGRLQ) form a disordered region. The Zn(2+) site is built by C885, C887, C896, and H897. Residues 891-901 (KKYKQCHGRLQ) show a composition bias toward basic residues.

Belongs to the SecA family. In terms of assembly, monomer and homodimer. Part of the essential Sec protein translocation apparatus which comprises SecA, SecYEG and auxiliary proteins SecDF-YajC and YidC. Zn(2+) is required as a cofactor.

Its subcellular location is the cell inner membrane. The protein resides in the cytoplasm. The catalysed reaction is ATP + H2O + cellular proteinSide 1 = ADP + phosphate + cellular proteinSide 2.. Its function is as follows. Part of the Sec protein translocase complex. Interacts with the SecYEG preprotein conducting channel. Has a central role in coupling the hydrolysis of ATP to the transfer of proteins into and across the cell membrane, serving both as a receptor for the preprotein-SecB complex and as an ATP-driven molecular motor driving the stepwise translocation of polypeptide chains across the membrane. This is Protein translocase subunit SecA from Escherichia coli O6:K15:H31 (strain 536 / UPEC).